Reading from the N-terminus, the 235-residue chain is 2-C-methyl-D-erythritol 4-phosphate cytidylyltransferase (235 aa).

The protein belongs to the IspD/TarI cytidylyltransferase family. IspD subfamily.

It carries out the reaction 2-C-methyl-D-erythritol 4-phosphate + CTP + H(+) = 4-CDP-2-C-methyl-D-erythritol + diphosphate. The protein operates within isoprenoid biosynthesis; isopentenyl diphosphate biosynthesis via DXP pathway; isopentenyl diphosphate from 1-deoxy-D-xylulose 5-phosphate: step 2/6. Its function is as follows. Catalyzes the formation of 4-diphosphocytidyl-2-C-methyl-D-erythritol from CTP and 2-C-methyl-D-erythritol 4-phosphate (MEP). This Synechococcus sp. (strain JA-3-3Ab) (Cyanobacteria bacterium Yellowstone A-Prime) protein is 2-C-methyl-D-erythritol 4-phosphate cytidylyltransferase.